The primary structure comprises 298 residues: Homoserine kinase (298 aa).

ATP is bound at residue 83–93 (PISRGLGSSSS).

This sequence belongs to the GHMP kinase family. Homoserine kinase subfamily.

It localises to the cytoplasm. It carries out the reaction L-homoserine + ATP = O-phospho-L-homoserine + ADP + H(+). It functions in the pathway amino-acid biosynthesis; L-threonine biosynthesis; L-threonine from L-aspartate: step 4/5. Catalyzes the ATP-dependent phosphorylation of L-homoserine to L-homoserine phosphate. This Clostridium botulinum (strain Alaska E43 / Type E3) protein is Homoserine kinase.